The sequence spans 500 residues: Cytochrome P450 2D20 (500 aa).

Residue Cys446 coordinates heme.

It belongs to the cytochrome P450 family. The cofactor is heme.

It localises to the endoplasmic reticulum membrane. It is found in the microsome membrane. In Mesocricetus auratus (Golden hamster), this protein is Cytochrome P450 2D20 (CYP2D20).